We begin with the raw amino-acid sequence, 148 residues long: Extracellular globin-2B (148 aa).

The Globin domain maps to 3–148 (CCSAADRHEV…IADVIKAELP (146 aa)). Cysteines 4 and 135 form a disulfide. H98 serves as a coordination point for heme b.

It belongs to the globin family. In terms of assembly, disulfide bonded trimer of chains IIA, IIB, and IIC.

It is found in the secreted. This is Extracellular globin-2B from Tylorrhynchus heterochetus (Japanese palolo worm).